Consider the following 144-residue polypeptide: Cystatin-F (144 aa).

A signal peptide spans 1-18; sequence MWLAILLALCCLTSDTHG. The N-linked (GlcNAc...) asparagine glycan is linked to Asn61. Residues 80-84 carry the Secondary area of contact motif; it reads QVVKG. Intrachain disulfides connect Cys98/Cys109 and Cys123/Cys143.

The protein belongs to the cystatin family.

The protein resides in the secreted. Functionally, inhibits papain and cathepsin L but with affinities lower than other cystatins. May play a role in immune regulation through inhibition of a unique target in the hematopoietic system. The protein is Cystatin-F (Cst7) of Mus musculus (Mouse).